The sequence spans 242 residues: Polycomb group RING finger protein 3 (242 aa).

The RING-type zinc-finger motif lies at 17–56; the sequence is CRLCSGYLIDATTVTECLHTFCRSCLVKYLEENNTCPTCR. Residues 115–149 form a disordered region; that stretch reads AKQHLDSHRNGETKADDSSNKEAAEEKPEEDNDYH. The span at 117-140 shows a compositional bias: basic and acidic residues; sequence QHLDSHRNGETKADDSSNKEAAEE. Residues 132-242 are interaction with BCORL1; that stretch reads SSNKEAAEEK…LHYRPKMDLL (111 aa).

As to quaternary structure, component of a PRC1-like complex that contains PCGF3, RNF2 and RYBP. Interacts with CBX6, CBX7 and CBX8. Interacts with BCORL1.

The protein resides in the nucleus. The protein localises to the nucleoplasm. Component of a Polycomb group (PcG) multiprotein PRC1-like complex, a complex class required to maintain the transcriptionally repressive state of many genes, including Hox genes, throughout development. PcG PRC1 complex acts via chromatin remodeling and modification of histones; it mediates monoubiquitination of histone H2A 'Lys-119', rendering chromatin heritably changed in its expressibility. Within the PRC1-like complex, regulates RNF2 ubiquitin ligase activity. Plays a redundant role with PCGF5 as part of a PRC1-like complex that mediates monoubiquitination of histone H2A 'Lys-119' on the X chromosome and is required for normal silencing of one copy of the X chromosome in XX females. This chain is Polycomb group RING finger protein 3 (PCGF3), found in Homo sapiens (Human).